A 525-amino-acid chain; its full sequence is Erythropoietin receptor (525 aa).

An N-terminal signal peptide occupies residues 1 to 32; the sequence is MGAPSSLLFSTAHWRTVPFLLAFWVLLSTGTA. Residues 33–249 lie on the Extracellular side of the membrane; sequence EDPTMTPEFL…TIATIIDLRL (217 aa). A disulfide bridge links Cys58 with Cys68. 4 N-linked (GlcNAc...) asparagine glycosylation sites follow: Asn77, Asn100, Asn149, and Asn185. Cysteines 91 and 107 form a disulfide. The Fibronectin type-III domain occupies 146 to 246; that stretch reads PPLNVTVKEK…APITIATIID (101 aa). The WSXWS motif motif lies at 232–236; the sequence is WSDWT. Residues 250–270 form a helical membrane-spanning segment; the sequence is LLLLSIAIFVALIAGVGVYIF. The Cytoplasmic segment spans residues 271 to 525; sequence MRHGMYLKHK…NFLAPIYSQS (255 aa). The Box 1 motif signature appears at 281–289; the sequence is VWPQVPTPE. Disordered regions lie at residues 434-459 and 492-513; these read APRM…QSIP and LDMS…QNSP. The span at 447–459 shows a compositional bias: polar residues; that stretch reads ENSVSSDGKQSIP. The ITIM motif motif lies at 487–492; sequence LKYAYL.

It belongs to the type I cytokine receptor family. Type 1 subfamily. In terms of tissue distribution, expressed in the ventral blood island from stage 28 through to stage 36. Expressed in the circulating blood by stage 40. In the adult, highly expressed in peripheral blood cells including immature erythrocytes and basophils, and moderately expressed in the hematopoietic organs: liver, kidney and spleen. Expressed at a low level in adult brain.

It localises to the cell membrane. In terms of biological role, receptor for erythropoietin. Mediates erythropoietin-induced erythroblast proliferation and differentiation. The sequence is that of Erythropoietin receptor from Xenopus laevis (African clawed frog).